We begin with the raw amino-acid sequence, 1269 residues long: Phospholipase D A (1269 aa).

The segment covering 55 to 64 (YTSVGSAPTT) has biased composition (polar residues). The tract at residues 55 to 121 (YTSVGSAPTT…NNNLQSPTQS (67 aa)) is disordered. Low complexity-rich tracts occupy residues 65 to 87 (NNNS…SGSS) and 95 to 114 (NSNK…NNNN). Residues 131 to 192 (SKALHDFEEK…ELKSLDELLH (62 aa)) adopt a coiled-coil conformation. The span at 222–232 (NSVTNNTPSSA) shows a compositional bias: polar residues. Disordered stretches follow at residues 222–269 (NSVT…SSST) and 300–320 (NSYP…DPNL). A compositionally biased stretch (low complexity) spans 233-269 (TPLTLSNNNNYTSSSLATSPTTNSSSSSSSSSSSSST). 2 PLD phosphodiesterase domains span residues 435-462 (IYWS…CFGR) and 704-731 (EQIY…NDRS). Catalysis depends on residues His440, Lys442, Asp447, His709, Lys711, and Asp716. Positions 803-835 (NNNNNSNINNNINNNNNEINNNNNNNNNNNSNE) form a coiled coil. Low complexity-rich tracts occupy residues 810-850 (INNN…NSNS), 859-906 (NLPP…GTTN), and 934-943 (SSPQDSPQDS). 2 disordered regions span residues 810–966 (INNN…HQSP) and 983–1007 (SNEQ…TTTD). Residues 987–1003 (LPPPPSSTTPPPPPPPL) are compositionally biased toward pro residues. Residues 1059–1096 (TTAQQQQQQQQQQQQQQQQQQQQQQQQQQQQQQQQQQQ) are a coiled coil. The interval 1116–1167 (IKKKRSSISPSTSSNKLLLSGNGSGDSIRVVTDSGSSPRGQPRSMSSLHDHA) is disordered. Positions 1122–1142 (SISPSTSSNKLLLSGNGSGDS) are enriched in low complexity. A compositionally biased stretch (polar residues) spans 1148–1162 (DSGSSPRGQPRSMSS).

It belongs to the phospholipase D family.

It carries out the reaction a 1,2-diacyl-sn-glycero-3-phosphocholine + H2O = a 1,2-diacyl-sn-glycero-3-phosphate + choline + H(+). Its activity is regulated as follows. Inhibited by butan-1-ol. In terms of biological role, plays a role in cell growth. Hydrolyzes membrane phospholipids, such as PtdCho free headgroup and PtdOH (phosphatidic acid; signaling molecule on its own). Involved in the inhibition of actin-based motility and endocytosis. Its inhibition causes complete collapse of F-actin organization. The protein is Phospholipase D A (pldA) of Dictyostelium discoideum (Social amoeba).